We begin with the raw amino-acid sequence, 624 residues long: Glutamine--fructose-6-phosphate aminotransferase [isomerizing] (624 aa).

C2 functions as the Nucleophile; for GATase activity in the catalytic mechanism. Residues 2–226 form the Glutamine amidotransferase type-2 domain; that stretch reads CGIVGYVGQQ…QDQAVVLTAD (225 aa). SIS domains lie at 297–436 and 469–614; these read SDQE…ARGT and LAQR…VDKP. K619 acts as the For Fru-6P isomerization activity in catalysis.

Homodimer.

The protein resides in the cytoplasm. It catalyses the reaction D-fructose 6-phosphate + L-glutamine = D-glucosamine 6-phosphate + L-glutamate. Its function is as follows. Catalyzes the first step in hexosamine metabolism, converting fructose-6P into glucosamine-6P using glutamine as a nitrogen source. This chain is Glutamine--fructose-6-phosphate aminotransferase [isomerizing], found in Mycolicibacterium paratuberculosis (strain ATCC BAA-968 / K-10) (Mycobacterium paratuberculosis).